The primary structure comprises 120 residues: Nitrogenase-stabilizing/protective protein NifW (120 aa).

Belongs to the NifW family. In terms of assembly, homotrimer; associates with NifD.

Functionally, may protect the nitrogenase Fe-Mo protein from oxidative damage. The chain is Nitrogenase-stabilizing/protective protein NifW from Rhodospirillum rubrum (strain ATCC 11170 / ATH 1.1.1 / DSM 467 / LMG 4362 / NCIMB 8255 / S1).